Consider the following 160-residue polypeptide: Fimbrial protein (160 aa).

The propeptide at 1–7 (MKSLQKG) is leader sequence. An N-methylphenylalanine modification is found at phenylalanine 8. Residues 8-28 (FTLIELMIVVAIIGILAAFAI) traverse the membrane as a helical segment.

This sequence belongs to the N-Me-Phe pilin family. As to quaternary structure, the pili are polar flexible filaments of about 5.4 nanometers diameter and 2.5 micrometers average length; they consist of only a single polypeptide chain arranged in a helical configuration of five subunits per turn in the assembled pilus.

Its subcellular location is the fimbrium. The protein resides in the membrane. This is Fimbrial protein (fimA) from Dichelobacter nodosus (Bacteroides nodosus).